The following is a 112-amino-acid chain: uncharacterized protein (112 aa).

Disordered stretches follow at residues 1-53 (MSKL…QRLK) and 80-112 (MINQ…MLEL). A compositionally biased stretch (polar residues) spans 8 to 22 (SALQKLIESQKNPNA). The span at 86–96 (ETKKRKRKQKK) shows a compositional bias: basic residues. A compositionally biased stretch (acidic residues) spans 101–112 (DYGVFEEDMLEL).

The protein resides in the nucleus. Its subcellular location is the nucleolus. This is an uncharacterized protein from Schizosaccharomyces pombe (strain 972 / ATCC 24843) (Fission yeast).